A 212-amino-acid chain; its full sequence is ATP-dependent Clp protease proteolytic subunit (212 aa).

Ser114 functions as the Nucleophile in the catalytic mechanism. Residue His139 is part of the active site.

It belongs to the peptidase S14 family. Fourteen ClpP subunits assemble into 2 heptameric rings which stack back to back to give a disk-like structure with a central cavity, resembling the structure of eukaryotic proteasomes.

The protein resides in the cytoplasm. The enzyme catalyses Hydrolysis of proteins to small peptides in the presence of ATP and magnesium. alpha-casein is the usual test substrate. In the absence of ATP, only oligopeptides shorter than five residues are hydrolyzed (such as succinyl-Leu-Tyr-|-NHMec, and Leu-Tyr-Leu-|-Tyr-Trp, in which cleavage of the -Tyr-|-Leu- and -Tyr-|-Trp bonds also occurs).. In terms of biological role, cleaves peptides in various proteins in a process that requires ATP hydrolysis. Has a chymotrypsin-like activity. Plays a major role in the degradation of misfolded proteins. This chain is ATP-dependent Clp protease proteolytic subunit, found in Aromatoleum aromaticum (strain DSM 19018 / LMG 30748 / EbN1) (Azoarcus sp. (strain EbN1)).